A 432-amino-acid chain; its full sequence is Glutamate-1-semialdehyde 2,1-aminomutase (432 aa).

Residue lysine 267 is modified to N6-(pyridoxal phosphate)lysine.

It belongs to the class-III pyridoxal-phosphate-dependent aminotransferase family. HemL subfamily. In terms of assembly, homodimer. The cofactor is pyridoxal 5'-phosphate.

It localises to the cytoplasm. The enzyme catalyses (S)-4-amino-5-oxopentanoate = 5-aminolevulinate. Its pathway is porphyrin-containing compound metabolism; protoporphyrin-IX biosynthesis; 5-aminolevulinate from L-glutamyl-tRNA(Glu): step 2/2. The protein is Glutamate-1-semialdehyde 2,1-aminomutase of Rhodococcus erythropolis (strain PR4 / NBRC 100887).